The following is a 157-amino-acid chain: Small ribosomal subunit protein uS7 (157 aa).

This sequence belongs to the universal ribosomal protein uS7 family. Part of the 30S ribosomal subunit. Contacts proteins S9 and S11.

Its function is as follows. One of the primary rRNA binding proteins, it binds directly to 16S rRNA where it nucleates assembly of the head domain of the 30S subunit. Is located at the subunit interface close to the decoding center, probably blocks exit of the E-site tRNA. The chain is Small ribosomal subunit protein uS7 from Koribacter versatilis (strain Ellin345).